A 371-amino-acid chain; its full sequence is Protein RecA (371 aa).

75–82 (GPESSGKT) contributes to the ATP binding site. Positions 343–371 (KAKDEPIADEDQPIDVVPNFDDQDVEPQN) are disordered.

Belongs to the RecA family.

It localises to the cytoplasm. Its function is as follows. Can catalyze the hydrolysis of ATP in the presence of single-stranded DNA, the ATP-dependent uptake of single-stranded DNA by duplex DNA, and the ATP-dependent hybridization of homologous single-stranded DNAs. It interacts with LexA causing its activation and leading to its autocatalytic cleavage. The protein is Protein RecA of Corynebacterium urealyticum (strain ATCC 43042 / DSM 7109).